Consider the following 258-residue polypeptide: L-2,3-butanediol dehydrogenase (258 aa).

Residues 12–14, aspartate 33, glutamine 37, 61–62, asparagine 88, tyrosine 154, lysine 158, and 184–189 contribute to the NAD(+) site; these read QGI, DV, and PGIVGT. Tyrosine 154 acts as the Proton acceptor in catalysis.

It belongs to the short-chain dehydrogenases/reductases (SDR) family. Homotetramer.

It catalyses the reaction (S,S)-butane-2,3-diol + NAD(+) = (S)-acetoin + NADH + H(+). The enzyme catalyses (S)-acetoin + NAD(+) = diacetyl + NADH + H(+). Slightly activated by Ba(2+), Ca(2+), Mn(2+), Mg(2+), and Co(2+), while Hg(2+) and Cu(2+) cause marked inhibition of the activity. Ni(2+), Zn(2+) and Cd(2+) have no effect on the catalytic activity. Is also slightly inhibited by lactate, pyruvate, succinate, acetate and formate. Catalyzes the reversible reduction of (S)-acetoin to (S,S)-butane-2,3-diol (L-BD) in the presence of NADH. To a lesser extent, can also catalyze the irreversible reduction of diacetyl to (S)-acetoin. Cannot oxidize meso-BD, D-BD, 2-butanol, 1,2-propanediol, ethanol, acetol, 1,2-butanediol, 1,3-butanediol, n-butanol, and n-propanol. Cannot reduce (R)-acetoin, acetol, dihydroxyacetone and 2,4-pentanedione. This Corynebacterium glutamicum (Brevibacterium saccharolyticum) protein is L-2,3-butanediol dehydrogenase.